Consider the following 61-residue polypeptide: Small ribosomal subunit protein uS14 (61 aa).

Residues C24, C27, C40, and C43 each contribute to the Zn(2+) site.

This sequence belongs to the universal ribosomal protein uS14 family. Zinc-binding uS14 subfamily. As to quaternary structure, part of the 30S ribosomal subunit. Contacts proteins S3 and S10. It depends on Zn(2+) as a cofactor.

Functionally, binds 16S rRNA, required for the assembly of 30S particles and may also be responsible for determining the conformation of the 16S rRNA at the A site. This Streptococcus equi subsp. zooepidemicus (strain H70) protein is Small ribosomal subunit protein uS14.